Here is a 556-residue protein sequence, read N- to C-terminus: Formate--tetrahydrofolate ligase 1 (556 aa).

65–72 (TPAGEGKS) is a binding site for ATP.

Belongs to the formate--tetrahydrofolate ligase family.

The enzyme catalyses (6S)-5,6,7,8-tetrahydrofolate + formate + ATP = (6R)-10-formyltetrahydrofolate + ADP + phosphate. The protein operates within one-carbon metabolism; tetrahydrofolate interconversion. The sequence is that of Formate--tetrahydrofolate ligase 1 from Streptococcus pyogenes serotype M1.